An 86-amino-acid polypeptide reads, in one-letter code: Large ribosomal subunit protein uL23 (86 aa).

It belongs to the universal ribosomal protein uL23 family. In terms of assembly, part of the 50S ribosomal subunit. Contacts protein L29.

Functionally, binds to 23S rRNA. One of the proteins that surrounds the polypeptide exit tunnel on the outside of the ribosome. In Thermococcus sibiricus (strain DSM 12597 / MM 739), this protein is Large ribosomal subunit protein uL23.